The sequence spans 65 residues: Large ribosomal subunit protein uL29 (65 aa).

Belongs to the universal ribosomal protein uL29 family.

The protein is Large ribosomal subunit protein uL29 of Delftia acidovorans (strain DSM 14801 / SPH-1).